Reading from the N-terminus, the 343-residue chain is Peptide methionine sulfoxide reductase msrA/msrB (343 aa).

The segment at 21-174 (KVIYLAGGCF…PNGYCHIDLK (154 aa)) is peptide methionine sulfoxide reductase A. Cys29 functions as the Cysteine sulfenic acid (-SOH) intermediate in the catalytic mechanism. Residues 191 to 314 (DEVLKKKLTQ…NSASLRFIPL (124 aa)) enclose the MsrB domain. Cys303 acts as the Nucleophile in catalysis.

This sequence in the N-terminal section; belongs to the MsrA Met sulfoxide reductase family. In the C-terminal section; belongs to the MsrB Met sulfoxide reductase family.

The catalysed reaction is L-methionyl-[protein] + [thioredoxin]-disulfide + H2O = L-methionyl-(S)-S-oxide-[protein] + [thioredoxin]-dithiol. It carries out the reaction [thioredoxin]-disulfide + L-methionine + H2O = L-methionine (S)-S-oxide + [thioredoxin]-dithiol. The enzyme catalyses L-methionyl-[protein] + [thioredoxin]-disulfide + H2O = L-methionyl-(R)-S-oxide-[protein] + [thioredoxin]-dithiol. In terms of biological role, has an important function as a repair enzyme for proteins that have been inactivated by oxidation. Catalyzes the reversible oxidation-reduction of methionine sulfoxide in proteins to methionine. The protein is Peptide methionine sulfoxide reductase msrA/msrB of Enterococcus faecalis (Streptococcus faecalis).